The sequence spans 325 residues: Acetyl-coenzyme A carboxylase carboxyl transferase subunit alpha (325 aa).

Positions 35–292 (EIEKLEARLA…DRVLRRSLKQ (258 aa)) constitute a CoA carboxyltransferase C-terminal domain.

The protein belongs to the AccA family. Acetyl-CoA carboxylase is a heterohexamer composed of biotin carboxyl carrier protein (AccB), biotin carboxylase (AccC) and two subunits each of ACCase subunit alpha (AccA) and ACCase subunit beta (AccD).

Its subcellular location is the cytoplasm. The catalysed reaction is N(6)-carboxybiotinyl-L-lysyl-[protein] + acetyl-CoA = N(6)-biotinyl-L-lysyl-[protein] + malonyl-CoA. Its pathway is lipid metabolism; malonyl-CoA biosynthesis; malonyl-CoA from acetyl-CoA: step 1/1. In terms of biological role, component of the acetyl coenzyme A carboxylase (ACC) complex. First, biotin carboxylase catalyzes the carboxylation of biotin on its carrier protein (BCCP) and then the CO(2) group is transferred by the carboxyltransferase to acetyl-CoA to form malonyl-CoA. This is Acetyl-coenzyme A carboxylase carboxyl transferase subunit alpha from Geobacillus kaustophilus (strain HTA426).